Here is a 75-residue protein sequence, read N- to C-terminus: DNA-directed RNA polymerase subunit Rpo6 (75 aa).

Belongs to the archaeal Rpo6/eukaryotic RPB6 RNA polymerase subunit family. As to quaternary structure, part of the RNA polymerase complex.

It localises to the cytoplasm. The catalysed reaction is RNA(n) + a ribonucleoside 5'-triphosphate = RNA(n+1) + diphosphate. Functionally, DNA-dependent RNA polymerase (RNAP) catalyzes the transcription of DNA into RNA using the four ribonucleoside triphosphates as substrates. This Archaeoglobus fulgidus (strain ATCC 49558 / DSM 4304 / JCM 9628 / NBRC 100126 / VC-16) protein is DNA-directed RNA polymerase subunit Rpo6.